The primary structure comprises 633 residues: Bifunctional enzyme CysN/CysC (633 aa).

Positions 1–463 (MSHQSDLISE…REERAGRFGQ (463 aa)) are sulfate adenylyltransferase. The region spanning 22-241 (KELLRFLTCG…TVEIAADRNL (220 aa)) is the tr-type G domain. Positions 31-38 (GNVDDGKS) are G1. Residue 31 to 38 (GNVDDGKS) participates in GTP binding. Residues 89–93 (GITID) are G2. The segment at 110–113 (DTPG) is G3. GTP is bound by residues 110–114 (DTPGH) and 165–168 (NKMD). The segment at 165-168 (NKMD) is G4. Positions 204 to 206 (SAL) are G5. Positions 464-633 (QPATVLFSGL…LDLLRERQAI (170 aa)) are adenylyl-sulfate kinase. 472–479 (GLSGAGKS) serves as a coordination point for ATP.

In the C-terminal section; belongs to the APS kinase family. It in the N-terminal section; belongs to the TRAFAC class translation factor GTPase superfamily. Classic translation factor GTPase family. CysN/NodQ subfamily. Heterodimer composed of CysD, the smaller subunit, and CysNC.

The enzyme catalyses sulfate + ATP + H(+) = adenosine 5'-phosphosulfate + diphosphate. The catalysed reaction is adenosine 5'-phosphosulfate + ATP = 3'-phosphoadenylyl sulfate + ADP + H(+). It functions in the pathway sulfur metabolism; hydrogen sulfide biosynthesis; sulfite from sulfate: step 1/3. It participates in sulfur metabolism; hydrogen sulfide biosynthesis; sulfite from sulfate: step 2/3. Its function is as follows. With CysD forms the ATP sulfurylase (ATPS) that catalyzes the adenylation of sulfate producing adenosine 5'-phosphosulfate (APS) and diphosphate, the first enzymatic step in sulfur assimilation pathway. APS synthesis involves the formation of a high-energy phosphoric-sulfuric acid anhydride bond driven by GTP hydrolysis by CysN coupled to ATP hydrolysis by CysD. APS kinase catalyzes the synthesis of activated sulfate. The sequence is that of Bifunctional enzyme CysN/CysC (cysNC) from Pseudomonas aeruginosa (strain ATCC 15692 / DSM 22644 / CIP 104116 / JCM 14847 / LMG 12228 / 1C / PRS 101 / PAO1).